The sequence spans 320 residues: MTSSDLTPRQNWTREEIAAIYDLPLDQLFARALAVKAAHWADGAVQKSQLLSIKTGGCAENCGYCSQSASFKTGLKAEKLLPVEEVVDAARRAKANGADRFCMGAAWRSLKDRDLPKVAEMISAVKAEGLETCVTLGMLEEGQAEALKEAGLDYYNHNLDTSREYYSTVVTTRTFDDRIETLGRARQAGIKLCCGGILGMGESRSDRVGLIHELSLLSPHPESVPVNKLVPIEGTPLANSEELDTLELARAIAVCRIVFPKSWVRLSAGRETMSAEGQALCILAGANSIFVGDRLLTTANPAMDKDARLLESVGGGCSKC.

The 228-residue stretch at 43-270 (GAVQKSQLLS…KSWVRLSAGR (228 aa)) folds into the Radical SAM core domain. 3 residues coordinate [4Fe-4S] cluster: Cys58, Cys62, and Cys65. Cys102, Cys133, Cys193, and Arg265 together coordinate [2Fe-2S] cluster.

This sequence belongs to the radical SAM superfamily. Biotin synthase family. As to quaternary structure, homodimer. The cofactor is [4Fe-4S] cluster. Requires [2Fe-2S] cluster as cofactor.

It carries out the reaction (4R,5S)-dethiobiotin + (sulfur carrier)-SH + 2 reduced [2Fe-2S]-[ferredoxin] + 2 S-adenosyl-L-methionine = (sulfur carrier)-H + biotin + 2 5'-deoxyadenosine + 2 L-methionine + 2 oxidized [2Fe-2S]-[ferredoxin]. The protein operates within cofactor biosynthesis; biotin biosynthesis; biotin from 7,8-diaminononanoate: step 2/2. In terms of biological role, catalyzes the conversion of dethiobiotin (DTB) to biotin by the insertion of a sulfur atom into dethiobiotin via a radical-based mechanism. This is Biotin synthase from Hyphomonas neptunium (strain ATCC 15444).